We begin with the raw amino-acid sequence, 377 residues long: Compound eye opsin BCRH1 (377 aa).

The Extracellular segment spans residues 1–53 (MANVTGPQMAFYGSGAATFGYPEGMTVADFVPDRVKHMVLDHWYNYPPVNPMW). Residue Asn3 is glycosylated (N-linked (GlcNAc...) asparagine). The helical transmembrane segment at 54 to 78 (HYLLGVVYLFLGVISIAGNGLVIYL) threads the bilayer. The Cytoplasmic segment spans residues 79 to 90 (YMKSQALKTPAN). The helical transmembrane segment at 91–115 (MLIVNLALSDLIMLTTNFPPFCYNC) threads the bilayer. Over 116-131 (FSGGRWMFSGTYCEIY) the chain is Extracellular. The cysteines at positions 128 and 205 are disulfide-linked. A helical membrane pass occupies residues 132-151 (AALGAITGVCSIWTLCMISF). Residues 152–170 (DRYNIICNGFNGPKLTQGK) are Cytoplasmic-facing. Residues 171–194 (ATFMCGLAWVISVGWSLPPFFGWG) traverse the membrane as a helical segment. Over 195 to 218 (SYTLEGILDSCSYDYFTRDMNTIT) the chain is Extracellular. A helical membrane pass occupies residues 219–246 (YNICIFIFDFFLPASVIVFSYVFIVKAI). Over 247-281 (FAHEAAMRAQAKKMNVTNLRSNEAETQRAEIRIAK) the chain is Cytoplasmic. A helical membrane pass occupies residues 282–305 (TALVNVSLWFICWTPYAAITIQGL). Residues 306–313 (LGNAEGIT) are Extracellular-facing. A helical transmembrane segment spans residues 314–338 (PLLTTLPALLAKSCSCYNPFVYAIS). Lys325 carries the post-translational modification N6-(retinylidene)lysine. The Cytoplasmic portion of the chain corresponds to 339-377 (HPKFRLAITQHLPWFCVHEKDPNDVEENQSSNTQTQEKS).

It belongs to the G-protein coupled receptor 1 family. Opsin subfamily. In terms of processing, phosphorylated on some or all of the serine and threonine residues present in the C-terminal region. As to expression, expressed in all of the seven retinular cells (R1-R7) forming the main rhabdom in each ommatidium.

The protein resides in the membrane. Functionally, visual pigments are the light-absorbing molecules that mediate vision. They consist of an apoprotein, opsin, covalently linked to cis-retinal. This opsin produces visual pigments with maximal absorption in the blue-green region of the spectrum. In Hemigrapsus sanguineus (Asian shore crab), this protein is Compound eye opsin BCRH1.